The following is a 58-amino-acid chain: Protein translocase subunit SecE (58 aa).

The helical transmembrane segment at 38–58 threads the bilayer; the sequence is IVMAFVGLLAYLIQLVLAFII.

This sequence belongs to the SecE/SEC61-gamma family. As to quaternary structure, component of the Sec protein translocase complex. Heterotrimer consisting of SecY (alpha), SecG (beta) and SecE (gamma) subunits. The heterotrimers can form oligomers, although 1 heterotrimer is thought to be able to translocate proteins. Interacts with the ribosome. May interact with SecDF, and other proteins may be involved.

The protein resides in the cell membrane. Functionally, essential subunit of the Sec protein translocation channel SecYEG. Clamps together the 2 halves of SecY. May contact the channel plug during translocation. The polypeptide is Protein translocase subunit SecE (Acidianus ambivalens (Desulfurolobus ambivalens)).